The chain runs to 228 residues: Ephrin-A5 (228 aa).

An N-terminal signal peptide occupies residues 1 to 20 (MLHVEMLTLLFLVLWMCVFS). The Ephrin RBD domain occupies 29–162 (ADRYAVYWNS…KLKVFVRPTN (134 aa)). A glycan (N-linked (GlcNAc...) asparagine) is linked at Asn37. 2 disulfides stabilise this stretch: Cys62-Cys102 and Cys90-Cys151. Asn162 is a glycosylation site (N-linked (GlcNAc...) asparagine; atypical). The disordered stretch occupies residues 186 to 205 (EPADDTVHESAEPSRGENAA). The span at 190-200 (DTVHESAEPSR) shows a compositional bias: basic and acidic residues. A lipid anchor (GPI-anchor amidated asparagine) is attached at Asn203. The propeptide at 204 to 228 (AAQTPRIPSRLLAILLFLLAMLLTL) is removed in mature form.

Belongs to the ephrin family. As to quaternary structure, binds to the receptor tyrosine kinases EPHA2, EPHA3 and EPHB1. Forms a ternary EFNA5-EPHA3-ADAM10 complex mediating EFNA5 extracellular domain shedding by ADAM10 which regulates the EFNA5-EPHA3 complex internalization and function. Binds to EPHB2. Interacts with EPHA8; activates EPHA8. As to expression, expressed in myogenic progenitor cells.

It is found in the cell membrane. The protein localises to the membrane. Its subcellular location is the caveola. Cell surface GPI-bound ligand for Eph receptors, a family of receptor tyrosine kinases which are crucial for migration, repulsion and adhesion during neuronal, vascular and epithelial development. Binds promiscuously Eph receptors residing on adjacent cells, leading to contact-dependent bidirectional signaling into neighboring cells. The signaling pathway downstream of the receptor is referred to as forward signaling while the signaling pathway downstream of the ephrin ligand is referred to as reverse signaling. Induces compartmentalized signaling within a caveolae-like membrane microdomain when bound to the extracellular domain of its cognate receptor. This signaling event requires the activity of the Fyn tyrosine kinase. Activates the EPHA3 receptor to regulate cell-cell adhesion and cytoskeletal organization. With the receptor EPHA2 may regulate lens fiber cells shape and interactions and be important for lens transparency maintenance. May function actively to stimulate axon fasciculation. The interaction of EFNA5 with EPHA5 also mediates communication between pancreatic islet cells to regulate glucose-stimulated insulin secretion. Cognate/functional ligand for EPHA7, their interaction regulates brain development modulating cell-cell adhesion and repulsion. This Mus musculus (Mouse) protein is Ephrin-A5 (Efna5).